The sequence spans 184 residues: Photosystem I assembly protein Ycf4 (184 aa).

The next 2 helical transmembrane spans lie at Phe22–Ser42 and Ile57–Ser77.

Belongs to the Ycf4 family.

It is found in the plastid. The protein resides in the chloroplast thylakoid membrane. Functionally, seems to be required for the assembly of the photosystem I complex. The chain is Photosystem I assembly protein Ycf4 from Liriodendron tulipifera (Tuliptree).